Reading from the N-terminus, the 1058-residue chain is Carbamoyl phosphate synthase large chain (1058 aa).

Residues 1–401 (MPKRKDIQKI…SLLKACRSLE (401 aa)) are carboxyphosphate synthetic domain. Positions 129, 169, 175, 176, 208, 210, 215, 241, 242, 243, 284, and 298 each coordinate ATP. The ATP-grasp 1 domain occupies 133-327 (KQLMQELDQP…IAKLAAKIAV (195 aa)). The Mg(2+) site is built by glutamine 284, glutamate 298, and asparagine 300. Glutamine 284, glutamate 298, and asparagine 300 together coordinate Mn(2+). Residues 402–546 (IGVCHNEMTS…YSTYELENES (145 aa)) are oligomerization domain. Residues 547 to 929 (VQSNKESILV…ALYKAFEANN (383 aa)) are carbamoyl phosphate synthetic domain. In terms of domain architecture, ATP-grasp 2 spans 671 to 861 (EKALKELGIP…MAQIATKLIL (191 aa)). ATP contacts are provided by arginine 707, serine 746, isoleucine 748, glutamate 752, glycine 777, valine 778, histidine 779, serine 780, glutamine 820, and glutamate 832. 3 residues coordinate Mg(2+): glutamine 820, glutamate 832, and asparagine 834. Glutamine 820, glutamate 832, and asparagine 834 together coordinate Mn(2+). An MGS-like domain is found at 930–1058 (SHLSEFGQIV…ESRCFNIEAI (129 aa)). Residues 930 to 1058 (SHLSEFGQIV…ESRCFNIEAI (129 aa)) are allosteric domain.

It belongs to the CarB family. Composed of two chains; the small (or glutamine) chain promotes the hydrolysis of glutamine to ammonia, which is used by the large (or ammonia) chain to synthesize carbamoyl phosphate. Tetramer of heterodimers (alpha,beta)4. Requires Mg(2+) as cofactor. Mn(2+) is required as a cofactor.

The catalysed reaction is hydrogencarbonate + L-glutamine + 2 ATP + H2O = carbamoyl phosphate + L-glutamate + 2 ADP + phosphate + 2 H(+). The enzyme catalyses hydrogencarbonate + NH4(+) + 2 ATP = carbamoyl phosphate + 2 ADP + phosphate + 2 H(+). The protein operates within amino-acid biosynthesis; L-arginine biosynthesis; carbamoyl phosphate from bicarbonate: step 1/1. It functions in the pathway pyrimidine metabolism; UMP biosynthesis via de novo pathway; (S)-dihydroorotate from bicarbonate: step 1/3. Large subunit of the glutamine-dependent carbamoyl phosphate synthetase (CPSase). CPSase catalyzes the formation of carbamoyl phosphate from the ammonia moiety of glutamine, carbonate, and phosphate donated by ATP, constituting the first step of 2 biosynthetic pathways, one leading to arginine and/or urea and the other to pyrimidine nucleotides. The large subunit (synthetase) binds the substrates ammonia (free or transferred from glutamine from the small subunit), hydrogencarbonate and ATP and carries out an ATP-coupled ligase reaction, activating hydrogencarbonate by forming carboxy phosphate which reacts with ammonia to form carbamoyl phosphate. The sequence is that of Carbamoyl phosphate synthase large chain from Streptococcus pyogenes serotype M6 (strain ATCC BAA-946 / MGAS10394).